A 500-amino-acid polypeptide reads, in one-letter code: Aspartyl/glutamyl-tRNA(Asn/Gln) amidotransferase subunit B (500 aa).

This sequence belongs to the GatB/GatE family. GatB subfamily. In terms of assembly, heterotrimer of A, B and C subunits.

It catalyses the reaction L-glutamyl-tRNA(Gln) + L-glutamine + ATP + H2O = L-glutaminyl-tRNA(Gln) + L-glutamate + ADP + phosphate + H(+). It carries out the reaction L-aspartyl-tRNA(Asn) + L-glutamine + ATP + H2O = L-asparaginyl-tRNA(Asn) + L-glutamate + ADP + phosphate + 2 H(+). Its function is as follows. Allows the formation of correctly charged Asn-tRNA(Asn) or Gln-tRNA(Gln) through the transamidation of misacylated Asp-tRNA(Asn) or Glu-tRNA(Gln) in organisms which lack either or both of asparaginyl-tRNA or glutaminyl-tRNA synthetases. The reaction takes place in the presence of glutamine and ATP through an activated phospho-Asp-tRNA(Asn) or phospho-Glu-tRNA(Gln). This is Aspartyl/glutamyl-tRNA(Asn/Gln) amidotransferase subunit B from Allorhizobium ampelinum (strain ATCC BAA-846 / DSM 112012 / S4) (Agrobacterium vitis (strain S4)).